Reading from the N-terminus, the 128-residue chain is MARGHRSQIKRERNANKDTRPSAKLSYARVSVQKACFVLDAVRGKDVQTALGILAYNPRYASTLIEKLLKSAIANAENNNGMDVSKLYIEECYAGCAPTMKRIKPRAQGRAYRILKRLSHITIVLNER.

Residues 1-22 are disordered; sequence MARGHRSQIKRERNANKDTRPS. Basic and acidic residues predominate over residues 9-21; sequence IKRERNANKDTRP.

The protein belongs to the universal ribosomal protein uL22 family. In terms of assembly, part of the 50S ribosomal subunit.

In terms of biological role, this protein binds specifically to 23S rRNA; its binding is stimulated by other ribosomal proteins, e.g. L4, L17, and L20. It is important during the early stages of 50S assembly. It makes multiple contacts with different domains of the 23S rRNA in the assembled 50S subunit and ribosome. Its function is as follows. The globular domain of the protein is located near the polypeptide exit tunnel on the outside of the subunit, while an extended beta-hairpin is found that lines the wall of the exit tunnel in the center of the 70S ribosome. This Lachnoclostridium phytofermentans (strain ATCC 700394 / DSM 18823 / ISDg) (Clostridium phytofermentans) protein is Large ribosomal subunit protein uL22.